A 156-amino-acid polypeptide reads, in one-letter code: Isotocin-neurophysin IT 2 (156 aa).

Residues 1–19 form the signal peptide; it reads MTGAAVSVCLLYALSVCSA. Residues C20 and C25 are joined by a disulfide bond. Glycine amide is present on G28. 7 disulfides stabilise this stretch: C41-C85, C44-C58, C52-C75, C59-C65, C92-C105, C99-C117, and C106-C111.

It belongs to the vasopressin/oxytocin family. Post-translationally, seven disulfide bonds are present in neurophysin.

Its subcellular location is the secreted. Isotocin causes contraction of smooth muscles. This chain is Isotocin-neurophysin IT 2, found in Oncorhynchus keta (Chum salmon).